The primary structure comprises 55 residues: Small ribosomal subunit protein eS31 (55 aa).

The Zn(2+) site is built by C27, C30, C45, and C48. The C4-type zinc-finger motif lies at 27–48 (CSRCGKGFFMAQHKDRRSCGKC).

Belongs to the eukaryotic ribosomal protein eS31 family. In terms of assembly, part of the 30S ribosomal subunit. Zn(2+) serves as cofactor.

This is Small ribosomal subunit protein eS31 from Cenarchaeum symbiosum (strain A).